Consider the following 179-residue polypeptide: Adenine phosphoribosyltransferase (179 aa).

It belongs to the purine/pyrimidine phosphoribosyltransferase family. As to quaternary structure, homodimer.

The protein resides in the cytoplasm. It catalyses the reaction AMP + diphosphate = 5-phospho-alpha-D-ribose 1-diphosphate + adenine. It participates in purine metabolism; AMP biosynthesis via salvage pathway; AMP from adenine: step 1/1. In terms of biological role, catalyzes a salvage reaction resulting in the formation of AMP, that is energically less costly than de novo synthesis. The chain is Adenine phosphoribosyltransferase from Histophilus somni (strain 129Pt) (Haemophilus somnus).